The primary structure comprises 559 residues: Proline--tRNA ligase (559 aa).

The protein belongs to the class-II aminoacyl-tRNA synthetase family. ProS type 1 subfamily. As to quaternary structure, homodimer.

It is found in the cytoplasm. The catalysed reaction is tRNA(Pro) + L-proline + ATP = L-prolyl-tRNA(Pro) + AMP + diphosphate. In terms of biological role, catalyzes the attachment of proline to tRNA(Pro) in a two-step reaction: proline is first activated by ATP to form Pro-AMP and then transferred to the acceptor end of tRNA(Pro). As ProRS can inadvertently accommodate and process non-cognate amino acids such as alanine and cysteine, to avoid such errors it has two additional distinct editing activities against alanine. One activity is designated as 'pretransfer' editing and involves the tRNA(Pro)-independent hydrolysis of activated Ala-AMP. The other activity is designated 'posttransfer' editing and involves deacylation of mischarged Ala-tRNA(Pro). The misacylated Cys-tRNA(Pro) is not edited by ProRS. This Ruthia magnifica subsp. Calyptogena magnifica protein is Proline--tRNA ligase.